A 400-amino-acid chain; its full sequence is Acetate kinase (400 aa).

Asn10 contributes to the Mg(2+) binding site. Lys17 contacts ATP. Arg91 provides a ligand contact to substrate. Asp148 functions as the Proton donor/acceptor in the catalytic mechanism. Residues 208–212 (HLGNG), 283–285 (DCR), and 331–335 (GIGEN) contribute to the ATP site. Glu385 contacts Mg(2+).

It belongs to the acetokinase family. As to quaternary structure, homodimer. Mg(2+) is required as a cofactor. Requires Mn(2+) as cofactor.

It localises to the cytoplasm. It catalyses the reaction acetate + ATP = acetyl phosphate + ADP. It participates in metabolic intermediate biosynthesis; acetyl-CoA biosynthesis; acetyl-CoA from acetate: step 1/2. In terms of biological role, catalyzes the formation of acetyl phosphate from acetate and ATP. Can also catalyze the reverse reaction. In Shewanella frigidimarina (strain NCIMB 400), this protein is Acetate kinase.